Consider the following 516-residue polypeptide: H/ACA ribonucleoprotein complex subunit DKC1 (516 aa).

A disordered region spans residues 1-24 (MADGDGSSVKKRRKKDKRSLPDED). Catalysis depends on D123, which acts as the Nucleophile. In terms of domain architecture, PUA spans 294–369 (HKRLVMKDSA…VVAKIKRVIM (76 aa)). The interval 422–516 (KKEAAKVPQA…KQKEVEESSE (95 aa)) is disordered. The span at 434 to 446 (EVERAPKRKRESE) shows a compositional bias: basic and acidic residues. Residues 453–464 (SPPPSPATPPPE) show a composition bias toward pro residues. Residues 463–516 (PEELSKKEKKKKKKEKKAKEAAESGEEQVEVISESSAKKKKKKKKQKEVEESSE) are a coiled coil. Over residues 469 to 478 (KEKKKKKKEK) the composition is skewed to basic residues.

Belongs to the pseudouridine synthase TruB family. In terms of assembly, part of the H/ACA small nucleolar ribonucleoprotein (H/ACA snoRNP) complex, which contains NHP2/NOLA2, GAR1/NOLA1, NOP10/NOLA3, and DKC1/NOLA4, which is presumed to be the catalytic subunit. The complex contains a stable core formed by binding of one or two NOP10-DKC1 heterodimers to NHP2; GAR1 subsequently binds to this core via DKC1. The complex binds a box H/ACA small nucleolar RNA (snoRNA), which may target the specific site of modification within the RNA substrate.

Its subcellular location is the nucleus. The protein resides in the nucleolus. It is found in the cajal body. It catalyses the reaction uridine in 5S rRNA = pseudouridine in 5S rRNA. Functionally, catalytic subunit of H/ACA small nucleolar ribonucleoprotein (H/ACA snoRNP) complex, which catalyzes pseudouridylation of rRNA. This involves the isomerization of uridine such that the ribose is subsequently attached to C5, instead of the normal N1. Each rRNA can contain up to 100 pseudouridine ('psi') residues, which may serve to stabilize the conformation of rRNAs. Required for ribosome biogenesis and telomere maintenance. This chain is H/ACA ribonucleoprotein complex subunit DKC1 (DKC1), found in Gallus gallus (Chicken).